The primary structure comprises 185 residues: Ribosome maturation factor RimP (185 aa).

The protein belongs to the RimP family.

It is found in the cytoplasm. In terms of biological role, required for maturation of 30S ribosomal subunits. The polypeptide is Ribosome maturation factor RimP (Magnetococcus marinus (strain ATCC BAA-1437 / JCM 17883 / MC-1)).